Consider the following 395-residue polypeptide: Phosphopentomutase (395 aa).

Mn(2+)-binding residues include aspartate 10, aspartate 294, histidine 299, aspartate 335, histidine 336, and histidine 347.

Belongs to the phosphopentomutase family. Requires Mn(2+) as cofactor.

The protein localises to the cytoplasm. It carries out the reaction 2-deoxy-alpha-D-ribose 1-phosphate = 2-deoxy-D-ribose 5-phosphate. The enzyme catalyses alpha-D-ribose 1-phosphate = D-ribose 5-phosphate. It functions in the pathway carbohydrate degradation; 2-deoxy-D-ribose 1-phosphate degradation; D-glyceraldehyde 3-phosphate and acetaldehyde from 2-deoxy-alpha-D-ribose 1-phosphate: step 1/2. In terms of biological role, isomerase that catalyzes the conversion of deoxy-ribose 1-phosphate (dRib-1-P) and ribose 1-phosphate (Rib-1-P) to deoxy-ribose 5-phosphate (dRib-5-P) and ribose 5-phosphate (Rib-5-P), respectively. The chain is Phosphopentomutase from Actinobacillus succinogenes (strain ATCC 55618 / DSM 22257 / CCUG 43843 / 130Z).